Consider the following 829-residue polypeptide: G-type lectin S-receptor-like serine/threonine-protein kinase At1g34300 (829 aa).

The signal sequence occupies residues 1 to 25 (MAVKTPFLKLLPLLLLLLHFPFSFS). 2 consecutive Bulb-type lectin domains span residues 26 to 140 (TIPL…SSFD) and 143 to 260 (TDTI…PVNA). The Extracellular portion of the chain corresponds to 26 to 421 (TIPLGSVIYA…KGDDNNSKVH (396 aa)). N-linked (GlcNAc...) asparagine glycans are attached at residues asparagine 46, asparagine 98, asparagine 130, asparagine 151, asparagine 172, asparagine 178, asparagine 189, and asparagine 195. Residues 264–301 (AVDQCLVYGYCGNFGICSYNDTNPICSCPSRNFDFVDV) form the EGF-like domain. 5 disulfides stabilise this stretch: cysteine 268–cysteine 280, cysteine 274–cysteine 289, cysteine 317–cysteine 399, cysteine 350–cysteine 373, and cysteine 354–cysteine 360. Asparagine 283 and asparagine 320 each carry an N-linked (GlcNAc...) asparagine glycan. The region spanning 317-399 (CSGNTTMLDL…VPSTSYVKVC (83 aa)) is the Apple domain. Asparagine 416 is a glycosylation site (N-linked (GlcNAc...) asparagine). Residues 422–442 (LWIVAVAVIAGLLGLVAVEIG) traverse the membrane as a helical segment. Residues 443-829 (LWWCCCRKNP…RISEGSMLGS (387 aa)) lie on the Cytoplasmic side of the membrane. A Protein kinase domain is found at 484 to 759 (KSFKEKLGAG…GKVVQMLEGI (276 aa)). ATP is bound by residues 490–498 (LGAGGFGTV) and lysine 512. Position 532 is a phosphoserine (serine 532). Positions 572 to 589 (DSAKFLTWEYRFNIALGT) are caM-binding. Aspartate 608 acts as the Proton acceptor in catalysis. A phosphoserine mark is found at serine 625 and serine 799.

Belongs to the protein kinase superfamily. Ser/Thr protein kinase family.

The protein resides in the cell membrane. It catalyses the reaction L-seryl-[protein] + ATP = O-phospho-L-seryl-[protein] + ADP + H(+). The enzyme catalyses L-threonyl-[protein] + ATP = O-phospho-L-threonyl-[protein] + ADP + H(+). This Arabidopsis thaliana (Mouse-ear cress) protein is G-type lectin S-receptor-like serine/threonine-protein kinase At1g34300.